We begin with the raw amino-acid sequence, 238 residues long: Aspartate/glutamate leucyltransferase (238 aa).

This sequence belongs to the R-transferase family. Bpt subfamily.

It is found in the cytoplasm. It carries out the reaction N-terminal L-glutamyl-[protein] + L-leucyl-tRNA(Leu) = N-terminal L-leucyl-L-glutamyl-[protein] + tRNA(Leu) + H(+). It catalyses the reaction N-terminal L-aspartyl-[protein] + L-leucyl-tRNA(Leu) = N-terminal L-leucyl-L-aspartyl-[protein] + tRNA(Leu) + H(+). Functionally, functions in the N-end rule pathway of protein degradation where it conjugates Leu from its aminoacyl-tRNA to the N-termini of proteins containing an N-terminal aspartate or glutamate. This Aeromonas salmonicida (strain A449) protein is Aspartate/glutamate leucyltransferase.